The sequence spans 171 residues: Lipoprotein signal peptidase (171 aa).

3 helical membrane passes run 7–27 (GLIALLATLALDQASKLWLYF), 64–84 (LGRWLLVAVSLAAVIGLSVWM), and 88–108 (GSRLLAVALGLIVGGALGNAI). Residues aspartate 118 and aspartate 136 contribute to the active site. The helical transmembrane segment at 128–148 (SWYVFNVADAAIVAGVVGLIL) threads the bilayer.

The protein belongs to the peptidase A8 family.

The protein localises to the cell inner membrane. It catalyses the reaction Release of signal peptides from bacterial membrane prolipoproteins. Hydrolyzes -Xaa-Yaa-Zaa-|-(S,diacylglyceryl)Cys-, in which Xaa is hydrophobic (preferably Leu), and Yaa (Ala or Ser) and Zaa (Gly or Ala) have small, neutral side chains.. Its pathway is protein modification; lipoprotein biosynthesis (signal peptide cleavage). This protein specifically catalyzes the removal of signal peptides from prolipoproteins. The chain is Lipoprotein signal peptidase from Methylorubrum extorquens (strain PA1) (Methylobacterium extorquens).